Consider the following 343-residue polypeptide: Endoplasmic reticulum-resident calcium binding protein (343 aa).

A signal peptide spans M1–S26. 5 consecutive EF-hand domains span residues G59–E94, I95–A130, K135–E170, L172–G207, and K210–E245. Residues D72, N74, D76, E78, E83, D108, D110, D112, E119, D148, D150, D152, K154, E159, D185, N187, D189, K191, E196, D223, N225, D227, and E234 each coordinate Ca(2+). Positions E313–D331 are enriched in acidic residues. Positions E313–L343 are disordered.

Belongs to the CREC family.

The protein resides in the endoplasmic reticulum. In terms of biological role, calcium-binding protein. Required for schizont to ring transition. Required for the breakdown of the parasitophorous vacuole membrane during egress. Required for the proteolytic maturation of apical membrane antigen 1 (AMA-1) during egress. Required for the proteolytic maturation of subtilisin-like protease 1 (SUB1) during egress. Required for the proteolytic maturation of plasmepsin X (PMX) during egress. This Plasmodium falciparum (isolate 3D7) protein is Endoplasmic reticulum-resident calcium binding protein.